The chain runs to 209 residues: Thymidine kinase (209 aa).

ATP-binding positions include 9–16 and 88–91; these read AAMNAGKS and DEAQ. The active-site Proton acceptor is the E89. Residues C146, C148, C183, and H186 each contribute to the Zn(2+) site.

Belongs to the thymidine kinase family. In terms of assembly, homotetramer.

The protein localises to the cytoplasm. It catalyses the reaction thymidine + ATP = dTMP + ADP + H(+). This is Thymidine kinase from Legionella pneumophila (strain Lens).